A 154-amino-acid chain; its full sequence is Probable chemoreceptor glutamine deamidase CheD (154 aa).

It belongs to the CheD family.

The catalysed reaction is L-glutaminyl-[protein] + H2O = L-glutamyl-[protein] + NH4(+). In terms of biological role, probably deamidates glutamine residues to glutamate on methyl-accepting chemotaxis receptors (MCPs), playing an important role in chemotaxis. The protein is Probable chemoreceptor glutamine deamidase CheD of Methanococcus maripaludis (strain DSM 14266 / JCM 13030 / NBRC 101832 / S2 / LL).